Here is a 6793-residue protein sequence, read N- to C-terminus: Replicase polyprotein 1ab (6793 aa).

The 108-residue stretch at 2 to 109 (ASNHISLAFA…ELDLVFGRCG (108 aa)) folds into the CoV Nsp1 globular domain. Positions 112–368 (TIPVDQFMCG…TKFKFQLLAN (257 aa)) constitute a CoV Nsp2 N-terminal domain. Positions 396–785 (ILGLPWFVKK…LDTVTSFIKV (390 aa)) constitute a CoV Nsp2 middle domain. The CoV Nsp2 C-terminal domain maps to 776-897 (LDTVTSFIKV…VASCFKKKGG (122 aa)). Residues 898–993 (GVVTISDEVQ…IMVSQWPLSS (96 aa)) form the Ubiquitin-like 1 domain. Residues 1069–1302 (AFIEDKPVVV…SCDVKPFLTY (234 aa)) form the Peptidase C16 1 domain. Cys1103 serves as the catalytic For PL1-PRO activity. The C4-type 1; degenerate zinc finger occupies 1174-1205 (CGCGPGVRVYENAIFRFTPLKTAFPMGRCLIC). Residues His1252 and Asp1265 each act as for PL1-PRO activity in the active site. Residues 1303–1467 (KNIEFYQGEL…FQTEQPVEPL (165 aa)) enclose the Macro domain. The 56-residue stretch at 1638–1693 (AKPVQVVVTQDQRSFHTVELSTSQTYGQQLGDCVVEDKKVTNLKPVSKDKVVSVVP) folds into the Ubiquitin-like 2 domain. The Peptidase C16 2 domain maps to 1699–1965 (KHYGFVDAGI…FLDTMNVASE (267 aa)). Cys1737 acts as the For PL2-PRO activity in catalysis. The segment at 1816–1849 (TTCDGTCSTKRVVSTPVVNASVLKVGLDDGNCVH) adopts a C4-type 2; degenerate zinc-finger fold. Catalysis depends on for PL2-PRO activity residues His1902 and Asp1915. 2 helical membrane-spanning segments follow: residues 1973–1993 (FVSR…AICF) and 2036–2056 (YIKV…LMFM). The tract at residues 1973–2184 (FVSRNIIVLI…MGNIIVVAFI (212 aa)) is HD1. A 3Ecto domain is found at 2052 to 2116 (ALMFMFIRFT…TRVIWQHLKD (65 aa)). Disulfide bonds link Cys2068–Cys2094 and Cys2086–Cys2091. 3 helical membrane-spanning segments follow: residues 2119–2139 (IGNI…GFFV), 2141–2161 (IGIT…LGYQ), and 2164–2184 (VWLL…VAFI). The interval 2190–2280 (LFLKHVLFGC…VTKLNVIPTG (91 aa)) is Y1. A CoV Nsp3 Y domain is found at 2190–2530 (LFLKHVLFGC…PTISVANKKG (341 aa)). The Zn(2+) site is built by His2194, Cys2199, Cys2204, Cys2207, Cys2240, His2243, Cys2247, and Cys2250. The segment at 2194–2207 (HVLFGCDKPSCIAC) is ZF1. The interval 2240 to 2250 (CKKHNFFCVDC) is ZF2. A Y2 region spans residues 2281-2370 (PATIIIDKVE…LVDSALLASL (90 aa)). Residues 2281-2530 (PATIIIDKVE…PTISVANKKG (250 aa)) form a coV-Y region. Positions 2371 to 2428 (NVDFSANLHKAFVEVLSNSFGKDLSNCSNMNECRESLGLSDVPEEEFSAAVSEAHRYD) are Y3. The segment at 2429 to 2530 (VLISDVSFNN…PTISVANKKG (102 aa)) is Y4. The next 7 helical transmembrane spans lie at 2543–2563 (FFWH…LLDF), 2634–2654 (VPAG…TIFG), 2669–2689 (DSCI…RNVY), 2769–2789 (GSDY…IGMF), 2802–2822 (ILLN…FTKF), 2829–2849 (MSFG…SYVV), and 2878–2898 (VGFA…AYLI). An HD2 region spans residues 2543 to 2898 (FFWHLCVLIV…PWWVVLAYLI (356 aa)). One can recognise a Nsp4C domain in the interval 2917 to 3012 (LFEGDKFVGS…PTVSYNSTLQ (96 aa)). The Peptidase C30 domain maps to 3013-3314 (AGLRKMAQPS…VKQMYGVTLQ (302 aa)). Active-site for 3CL-PRO activity residues include His3053 and Cys3156. The next 7 membrane-spanning stretches (helical) occupy residues 3351-3371 (GYIT…MLLV), 3376-3396 (LFLQ…NIFK), 3414-3434 (FGGF…VMGL), 3443-3463 (PNKI…YYYS), 3466-3486 (VLGL…IGTA), 3488-3507 (YKLA…FDAI), and 3511-3531 (VFLY…LYWI). The tract at residues 3351 to 3531 (GYITPVFLAI…CVYYGSLYWI (181 aa)) is HD3. In terms of domain architecture, RdRp Nsp7 cofactor spans 3591-3673 (SKLTDLKCTN…SYFNDSSVLQ (83 aa)). A RdRp Nsp8 cofactor domain is found at 3674-3868 (SVAATYVNLP…LNCERIIKLQ (195 aa)). The 108-residue stretch at 3869 to 3976 (NNEIIPSKIK…GFIGATVRLQ (108 aa)) folds into the Nsp9 ssRNA-binding domain. An ExoN/MTase coactivator domain is found at 3977-4115 (AGKQTEQATN…DRAVIQSVDS (139 aa)). Residues Cys4050, Cys4053, His4059, Cys4066, Cys4092, Cys4095, Cys4103, and Cys4105 each coordinate Zn(2+). Zinc fingers lie at residues 4050–4066 (CLYC…DGFC) and 4092–4105 (CKVC…GCTC). The region spanning 4117–4366 (YLNRVRGSSA…ASECFIKSDI (250 aa)) is the NiRAN domain. Residues 4372 to 4470 (RTFDLLAYDF…WNKDLNLHSS (99 aa)) enclose the Nsp12 Interface domain. Positions 4401, 4407, 4412, 4416, and 4593 each coordinate Zn(2+). The region spanning 4471 to 5038 (RLTINELLQF…SMYEQSSVLQ (568 aa)) is the Nsp12 RNA-dependent RNA polymerase domain. Residues 4473-4687 (TINELLQFCA…HQKHLKSIVN (215 aa)) form a rdRp Fingers N-ter region. The tract at residues 4688-4726 (TRGASVVIGTTKFYGGWDNMLKTLIKDVENPHLMGWDYP) is rdRp Palm N-ter. The RdRp catalytic domain occupies 4718 to 4880 (PHLMGWDYPK…CYNSEYAALG (163 aa)). The tract at residues 4727 to 4785 (KCDRALPNMIRMISAMILGSKHVNCCSSSDRYYRLCNELAQVLTEMVYSNGGFYVKPGG) is rdRp Fingers C-ter. Positions 4748, 4751, and 4752 each coordinate Zn(2+). The tract at residues 4786 to 4921 (TTSGDATTAY…NKGPHEFCSQ (136 aa)) is rdRp Palm C-ter. Catalysis depends on residues Ser4865, Asp4866, and Asp4867. Positions 4922 to 5038 (HTMQIVDKDG…SMYEQSSVLQ (117 aa)) are rdRp Thumb. Residues 5039–5151 (SAGLCVVCSS…DDFNTLATSD (113 aa)) enclose the CV ZBD domain. Positions 5043, 5046, 5054, 5057, 5064, 5067, 5071, 5077, 5088, 5093, 5110, and 5113 each coordinate Zn(2+). The (+)RNA virus helicase ATP-binding domain occupies 5296 to 5477 (NIHEDYSNLI…MCVLKPDIFL (182 aa)). 5321-5328 (GPPGSGKS) contacts ATP. The 170-residue stretch at 5478 to 5647 (HKCYRCPAEI…DGCGLFKDCY (170 aa)) folds into the (+)RNA virus helicase C-terminal domain. The ExoN domain occupies 5707–5921 (LFCTRDFAMR…RCLAIHDCFV (215 aa)). Residues Asp5725, Glu5727, and Glu5826 contribute to the active site. Residues Cys5842, Cys5844, Cys5860, His5863, His5891, Cys5895, and His5898 each contribute to the Zn(2+) site. Residues His5902 and Asp5907 contribute to the active site. Residue Cys5913 coordinates Zn(2+). One can recognise an N7-MTase domain in the interval 5930-6151 (YPFIANEQAI…NLWQTFKNSN (222 aa)). An S-adenosyl-L-methionine-binding site is contributed by 5965–5971 (DVGNPKG). Positions 6042–6056 (CNGGSLYVNNHAFHT) are gpppA-binding. Zn(2+) is bound by residues Cys6080, Cys6097, Cys6108, and His6111. A Nsp15 N-terminal oligomerization domain is found at 6154–6214 (GLENIAYNVV…NVAFELYAKR (61 aa)). In terms of domain architecture, AV-Nsp11N/CoV-Nsp15M spans 6215-6332 (KVGLTPPLTI…IYTRKDGAFV (118 aa)). Residues 6349–6489 (QPRSNMEEDF…KDHKVQTFYP (141 aa)) form the NendoU domain. Catalysis depends on residues His6379, His6394, Lys6435, Lys6537, Asp6621, Lys6661, and Glu6694. Positions 6493–6789 (SAEWKCGYSM…VVCGFSNHLV (297 aa)) constitute a Nidovirus-type SAM-dependent 2'-O-MTase domain.

Belongs to the coronaviruses polyprotein 1ab family. In terms of assembly, 3CL-PRO exists as monomer and homodimer. Eight copies of nsp7 and eight copies of nsp8 assemble to form a heterohexadecamer. Nsp9 is a dimer. Nsp10 forms a dodecamer. Mn(2+) is required as a cofactor. Specific enzymatic cleavages in vivo by its own proteases yield mature proteins. 3CL-PRO and PL-PRO proteinases are autocatalytically processed.

The protein localises to the host membrane. It is found in the host cytoplasm. Its subcellular location is the host perinuclear region. It localises to the host endoplasmic reticulum-Golgi intermediate compartment. The catalysed reaction is Thiol-dependent hydrolysis of ester, thioester, amide, peptide and isopeptide bonds formed by the C-terminal Gly of ubiquitin (a 76-residue protein attached to proteins as an intracellular targeting signal).. The enzyme catalyses RNA(n) + a ribonucleoside 5'-triphosphate = RNA(n+1) + diphosphate. It carries out the reaction ATP + H2O = ADP + phosphate + H(+). It catalyses the reaction a 5'-end diphospho-ribonucleoside in mRNA + GTP + H(+) = a 5'-end (5'-triphosphoguanosine)-ribonucleoside in mRNA + diphosphate. The catalysed reaction is a 5'-end (N(7)-methyl 5'-triphosphoguanosine)-ribonucleoside in mRNA + S-adenosyl-L-methionine = a 5'-end (N(7)-methyl 5'-triphosphoguanosine)-(2'-O-methyl-ribonucleoside) in mRNA + S-adenosyl-L-homocysteine + H(+). The enzyme catalyses uridylyl-uridylyl-ribonucleotide-RNA = a 3'-end uridylyl-2',3'-cyclophospho-uridine-RNA + a 5'-end dephospho-ribonucleoside-RNA. Functionally, the replicase polyprotein of coronaviruses is a multifunctional protein: it contains the activities necessary for the transcription of negative stranded RNA, leader RNA, subgenomic mRNAs and progeny virion RNA as well as proteinases responsible for the cleavage of the polyprotein into functional products. In terms of biological role, the papain-like proteinase 1 (PLP1) and papain-like proteinase 2 (PLP2) are responsible for the cleavages located at the N-terminus of the replicase polyprotein. In addition, PLP2 possesses a deubiquitinating/deISGylating activity and processes both 'Lys-48'- and 'Lys-63'-linked polyubiquitin chains from cellular substrates. PLP2 also antagonizes innate immune induction of type I interferon by blocking the nuclear translocation of host IRF-3. Responsible for the majority of cleavages as it cleaves the C-terminus of replicase polyprotein at 11 sites. Recognizes substrates containing the core sequence [ILMVF]-Q-|-[SGACN]. Inhibited by the substrate-analog Cbz-Val-Asn-Ser-Thr-Leu-Gln-CMK. Also contains an ADP-ribose-1''-phosphate (ADRP)-binding function. Its function is as follows. The helicase which contains a zinc finger structure displays RNA and DNA duplex-unwinding activities with 5' to 3' polarity. ATPase activity is strongly stimulated by poly(U), poly(dT), poly(C), poly(dA), but not by poly(G). Functionally, the exoribonuclease acts on both ssRNA and dsRNA in a 3' to 5' direction. In terms of biological role, nsp7-nsp8 hexadecamer may possibly confer processivity to the polymerase, maybe by binding to dsRNA or by producing primers utilized by the latter. Forms a primer, NSP9-pU, which is utilized by the polymerase for the initiation of RNA chains. Interacts with ribosome signal recognition particle RNA (SRP). Together with NSP8, suppress protein integration into the cell membrane, thereby disrupting host immune defenses. Its function is as follows. RNA-directed RNA polymerase that catalyzes the transcription of viral genomic and subgenomic RNAs. Acts in complex with nsp7 and nsp8 to transcribe both the minus and positive strands of genomic RNA. The kinase-like NiRAN domain of NSP12 attaches one or more nucleotides to the amino terminus of NSP9, forming a covalent RNA-protein intermediate that serves as transcription/replication primer. Subgenomic RNAs (sgRNAs) are formed by discontinuous transcription: The polymerase has the ability to pause at transcription-regulating sequences (TRS) and jump to the leader TRS, resulting in a major deletion. This creates a series of subgenomic RNAs that are replicated, transcribed and translated. In addition, Nsp12 is a subunit of the viral RNA capping enzyme that catalyzes the RNA guanylyltransferase reaction for genomic and sub-genomic RNAs. Subsequently, the NiRAN domain transfers RNA to GDP, and forms the core cap structure GpppA-RNA. Functionally, plays a role in viral transcription/replication and prevents the simultaneous activation of host cell dsRNA sensors, such as MDA5/IFIH1, OAS, and PKR. Acts by degrading the 5'-polyuridines generated during replication of the poly(A) region of viral genomic and subgenomic RNAs. Catalyzes a two-step reaction in which a 2'3'-cyclic phosphate (2'3'-cP) is first generated by 2'-O transesterification, which is then hydrolyzed to a 3'-phosphate (3'-P). If not degraded, poly(U) RNA would hybridize with poly(A) RNA tails and activate host dsRNA sensors. The chain is Replicase polyprotein 1ab (rep) from Bat coronavirus 512/2005 (BtCoV).